An 816-amino-acid polypeptide reads, in one-letter code: Leucine--tRNA ligase (816 aa).

The 'HIGH' region signature appears at 40 to 51 (SYPSGSQLHAGH). Residues 576–580 (KMSKS) carry the 'KMSKS' region motif. Lys579 lines the ATP pocket.

Belongs to the class-I aminoacyl-tRNA synthetase family.

The protein resides in the cytoplasm. It catalyses the reaction tRNA(Leu) + L-leucine + ATP = L-leucyl-tRNA(Leu) + AMP + diphosphate. This chain is Leucine--tRNA ligase, found in Clostridium perfringens (strain ATCC 13124 / DSM 756 / JCM 1290 / NCIMB 6125 / NCTC 8237 / Type A).